Consider the following 171-residue polypeptide: Ribosome-binding factor A (171 aa).

Positions 126 to 138 (VREGAKHAGDADP) are enriched in basic and acidic residues. Residues 126–171 (VREGAKHAGDADPYRVSGVEEEAGGSGEVQAEFDAEDTGDRNRQDD) form a disordered region.

Belongs to the RbfA family. Monomer. Binds 30S ribosomal subunits, but not 50S ribosomal subunits or 70S ribosomes.

The protein resides in the cytoplasm. One of several proteins that assist in the late maturation steps of the functional core of the 30S ribosomal subunit. Associates with free 30S ribosomal subunits (but not with 30S subunits that are part of 70S ribosomes or polysomes). Required for efficient processing of 16S rRNA. May interact with the 5'-terminal helix region of 16S rRNA. This is Ribosome-binding factor A from Mycobacterium sp. (strain JLS).